A 127-amino-acid polypeptide reads, in one-letter code: Aspartate 1-decarboxylase (127 aa).

Serine 25 (schiff-base intermediate with substrate; via pyruvic acid) is an active-site residue. Serine 25 is subject to Pyruvic acid (Ser). Threonine 57 lines the substrate pocket. Tyrosine 58 acts as the Proton donor in catalysis. Residue glycine 73–alanine 75 participates in substrate binding.

The protein belongs to the PanD family. In terms of assembly, heterooctamer of four alpha and four beta subunits. The cofactor is pyruvate. In terms of processing, is synthesized initially as an inactive proenzyme, which is activated by self-cleavage at a specific serine bond to produce a beta-subunit with a hydroxyl group at its C-terminus and an alpha-subunit with a pyruvoyl group at its N-terminus.

The protein resides in the cytoplasm. The enzyme catalyses L-aspartate + H(+) = beta-alanine + CO2. It functions in the pathway cofactor biosynthesis; (R)-pantothenate biosynthesis; beta-alanine from L-aspartate: step 1/1. Its function is as follows. Catalyzes the pyruvoyl-dependent decarboxylation of aspartate to produce beta-alanine. The sequence is that of Aspartate 1-decarboxylase from Geobacillus sp. (strain WCH70).